Reading from the N-terminus, the 404-residue chain is Cysteine desulfurase IscS (404 aa).

Residues 75–76 (AT), Asn-155, Gln-183, and 203–205 (SAH) each bind pyridoxal 5'-phosphate. The residue at position 206 (Lys-206) is an N6-(pyridoxal phosphate)lysine. Thr-243 serves as a coordination point for pyridoxal 5'-phosphate. Cys-328 acts as the Cysteine persulfide intermediate in catalysis. Residue Cys-328 participates in [2Fe-2S] cluster binding.

The protein belongs to the class-V pyridoxal-phosphate-dependent aminotransferase family. NifS/IscS subfamily. Homodimer. Forms a heterotetramer with IscU, interacts with other sulfur acceptors. Pyridoxal 5'-phosphate is required as a cofactor.

Its subcellular location is the cytoplasm. The catalysed reaction is (sulfur carrier)-H + L-cysteine = (sulfur carrier)-SH + L-alanine. The protein operates within cofactor biosynthesis; iron-sulfur cluster biosynthesis. Functionally, master enzyme that delivers sulfur to a number of partners involved in Fe-S cluster assembly, tRNA modification or cofactor biosynthesis. Catalyzes the removal of elemental sulfur atoms from cysteine to produce alanine. Functions as a sulfur delivery protein for Fe-S cluster synthesis onto IscU, an Fe-S scaffold assembly protein, as well as other S acceptor proteins. The polypeptide is Cysteine desulfurase IscS (Azotobacter vinelandii (strain DJ / ATCC BAA-1303)).